We begin with the raw amino-acid sequence, 265 residues long: Chanoclavine-I dehydrogenase easD (265 aa).

The N-terminal stretch at 1–20 is a signal peptide; that stretch reads MSFVSSKIFAITGGASGIGA. NADP(+)-binding residues include isoleucine 18, aspartate 66, arginine 132, tyrosine 169, lysine 173, and threonine 205. Tyrosine 169 serves as the catalytic Proton donor. Lysine 173 functions as the Lowers pKa of active site Tyr in the catalytic mechanism.

The protein belongs to the short-chain dehydrogenases/reductases (SDR) family. Homotetramer.

The catalysed reaction is chanoclavine-I + NAD(+) = chanoclavine-I aldehyde + NADH + H(+). It functions in the pathway alkaloid biosynthesis; ergot alkaloid biosynthesis. Chanoclavine-I dehydrogenase; part of the gene cluster that mediates the biosynthesis of fungal ergot alkaloid. DmaW catalyzes the first step of ergot alkaloid biosynthesis by condensing dimethylallyl diphosphate (DMAP) and tryptophan to form 4-dimethylallyl-L-tryptophan. The second step is catalyzed by the methyltransferase easF that methylates 4-dimethylallyl-L-tryptophan in the presence of S-adenosyl-L-methionine, resulting in the formation of 4-dimethylallyl-L-abrine. The catalase easC and the FAD-dependent oxidoreductase easE then transform 4-dimethylallyl-L-abrine to chanoclavine-I which is further oxidized by easD in the presence of NAD(+), resulting in the formation of chanoclavine-I aldehyde. Chanoclavine-I aldehyde is the precursor of ergoamides and ergopeptines in Clavicipitaceae, and clavine-type alcaloids such as fumiclavine in Trichocomaceae. However, the metabolites downstream of chanoclavine-I aldehyde in Arthrodermataceae have not been identified yet. In Trichophyton verrucosum (strain HKI 0517), this protein is Chanoclavine-I dehydrogenase easD.